We begin with the raw amino-acid sequence, 158 residues long: Large ribosomal subunit protein bL19 (158 aa).

A disordered region spans residues 1-35 (MTADSKDTSMSEDNTETATAIENSSAMVTDVTSKS). Polar residues predominate over residues 16–35 (ETATAIENSSAMVTDVTSKS).

It belongs to the bacterial ribosomal protein bL19 family.

Functionally, this protein is located at the 30S-50S ribosomal subunit interface and may play a role in the structure and function of the aminoacyl-tRNA binding site. The chain is Large ribosomal subunit protein bL19 from Prochlorococcus marinus (strain MIT 9313).